Reading from the N-terminus, the 226-residue chain is MASEQAAESYTVEELVAVNPYNPDILNDLEGFVNDQVSNQTYNLDANLSLLRLYQFEPERLSVQIVSRILIKALMAMPGPDFSLCLFLIPEHVQMEEQFKTLIVLSHYLETARFRQFWDEASKNRNILDVVPGFEQAIQSYAIHVLSLTYQKVPRPVLAEAINIEGLALDKFLEHHIANSGWVIEKGARSQLIVLPRNEFNHPELKKNTAETVPFEHVTRIFPVLS.

The PCI domain occupies Tyr42–Phe200.

It belongs to the eIF-3 subunit K family. Component of the eukaryotic translation initiation factor 3 (eIF-3) complex.

Its subcellular location is the cytoplasm. In terms of biological role, component of the eukaryotic translation initiation factor 3 (eIF-3) complex, which is involved in protein synthesis of a specialized repertoire of mRNAs and, together with other initiation factors, stimulates binding of mRNA and methionyl-tRNAi to the 40S ribosome. The eIF-3 complex specifically targets and initiates translation of a subset of mRNAs involved in cell proliferation. This Oryza sativa subsp. japonica (Rice) protein is Eukaryotic translation initiation factor 3 subunit K (TIF3K1).